The following is a 76-amino-acid chain: Sec-independent protein translocase protein TatA (76 aa).

A helical membrane pass occupies residues 1-21 (MGSFSIWHWLIVLVIVMLIFG). The segment at 47–76 (NADKPAEEAQPTQQVGGHTIDVEVKEKTKS) is disordered. A compositionally biased stretch (basic and acidic residues) spans 66-76 (IDVEVKEKTKS).

This sequence belongs to the TatA/E family. As to quaternary structure, the Tat system comprises two distinct complexes: a TatABC complex, containing multiple copies of TatA, TatB and TatC subunits, and a separate TatA complex, containing only TatA subunits. Substrates initially bind to the TatABC complex, which probably triggers association of the separate TatA complex to form the active translocon.

It localises to the cell inner membrane. Part of the twin-arginine translocation (Tat) system that transports large folded proteins containing a characteristic twin-arginine motif in their signal peptide across membranes. TatA could form the protein-conducting channel of the Tat system. The polypeptide is Sec-independent protein translocase protein TatA (Dechloromonas aromatica (strain RCB)).